The chain runs to 192 residues: Ion-translocating oxidoreductase complex subunit A (192 aa).

6 consecutive transmembrane segments (helical) span residues 5-25 (LLLL…FLGL), 39-59 (IGMG…AYLV), 63-83 (ILTP…VIAV), 102-122 (LLGI…VALL), 134-154 (IIYG…FAAM), and 171-191 (SIAM…TGLV).

Belongs to the NqrDE/RnfAE family. In terms of assembly, the complex is composed of six subunits: RnfA, RnfB, RnfC, RnfD, RnfE and RnfG.

It is found in the cell inner membrane. Part of a membrane-bound complex that couples electron transfer with translocation of ions across the membrane. The sequence is that of Ion-translocating oxidoreductase complex subunit A from Vibrio atlanticus (strain LGP32) (Vibrio splendidus (strain Mel32)).